A 498-amino-acid polypeptide reads, in one-letter code: TORTIFOLIA1-like protein 5 (498 aa).

HEAT repeat units lie at residues 56–93 (ETFSLFINCLQSTDSSAKSPVRKHCVSLLSVLSRSHGD), 97–134 (PHLSKMVSTVLRRLRDPDSSVRAACVAASVDMTTNITG), 136–173 (PFSILFGPMIETVIHDCDPNAQISAAMCLAAAVDAADE), 177–214 (EQLQKALPKIGKLLKSEGFKAKAELLGAIGTVIGAVGG), and 219–257 (KAVLDWLLPNVSEFLSSDDWRARKAAAEAMARVAMVEEE). Residues 296–423 (EGDSTEVSES…SSSQAKSNAE (128 aa)) form a disordered region. Low complexity predominate over residues 300–322 (TEVSESSSSSKSASSGLSATSGK). Basic and acidic residues predominate over residues 343-366 (NDVEPLDRGDTPKDVEQEAVVSKE). Over residues 390–400 (NGSNKSQVVQS) the composition is skewed to polar residues. The residue at position 426 (serine 426) is a Phosphoserine.

The protein is TORTIFOLIA1-like protein 5 of Arabidopsis thaliana (Mouse-ear cress).